A 446-amino-acid chain; its full sequence is Ribosome biogenesis protein WDR12 homolog (446 aa).

The interval 21–105 (VQITFFSKDK…ETILKIECII (85 aa)) is ubiquitin-like (UBL) domain. 2 WD repeats span residues 171-211 (KCSG…LVEK) and 216-255 (GHERAVECVSVNSDATRAISGSVDTNLKVWNLDPSDEATI). Positions 256 to 275 (YEKEEEESSAKKKRKKDTRT) are disordered. 4 WD repeats span residues 284–324 (GHRD…EVSR), 326–365 (KGPKSFTSIDIHPTSNLLISSCTDAIPRLYDPKNRDGAMV), 371–412 (GHQN…SSLF), and 416–446 (GHEDRILCAAWNEGLIATGSADCSIKIFETS).

Belongs to the WD repeat WDR12/YTM1 family.

The protein resides in the nucleus. It localises to the nucleolus. It is found in the nucleoplasm. Required for maturation of ribosomal RNAs and formation of the large ribosomal subunit. The chain is Ribosome biogenesis protein WDR12 homolog from Caenorhabditis briggsae.